Reading from the N-terminus, the 315-residue chain is Transaldolase (315 aa).

Lys-131 acts as the Schiff-base intermediate with substrate in catalysis.

This sequence belongs to the transaldolase family. Type 1 subfamily. Homodimer.

The protein localises to the cytoplasm. The enzyme catalyses D-sedoheptulose 7-phosphate + D-glyceraldehyde 3-phosphate = D-erythrose 4-phosphate + beta-D-fructose 6-phosphate. The protein operates within carbohydrate degradation; pentose phosphate pathway; D-glyceraldehyde 3-phosphate and beta-D-fructose 6-phosphate from D-ribose 5-phosphate and D-xylulose 5-phosphate (non-oxidative stage): step 2/3. Its function is as follows. Transaldolase is important for the balance of metabolites in the pentose-phosphate pathway. The protein is Transaldolase of Actinobacillus pleuropneumoniae serotype 5b (strain L20).